Consider the following 223-residue polypeptide: Protein Wnt-1 (223 aa).

Intrachain disulfides connect Cys7–Cys24, Cys72–Cys86, and Cys74–Cys81. Residue Ser78 is the site of O-palmitoleoyl serine; by PORCN attachment. Residues Val110–Lys135 form a disordered region. Over residues Ser125–Lys135 the composition is skewed to polar residues. 6 disulfides stabilise this stretch: Cys152/Cys183, Cys168/Cys178, Cys182/Cys222, Cys198/Cys213, Cys200/Cys210, and Cys205/Cys206. Asn169 is a glycosylation site (N-linked (GlcNAc...) asparagine).

It belongs to the Wnt family. Palmitoleoylation is required for efficient binding to frizzled receptors. Palmitoleoylation is necessary for proper trafficking to cell surface. Depalmitoleoylated by NOTUM, leading to inhibit Wnt signaling pathway.

The protein localises to the secreted. It is found in the extracellular space. Its subcellular location is the extracellular matrix. Its function is as follows. Ligand for members of the frizzled family of seven transmembrane receptors. Probable developmental protein. This is Protein Wnt-1 (WNT-1) from Strongylocentrotus purpuratus (Purple sea urchin).